Consider the following 189-residue polypeptide: GTP cyclohydrolase 1 (189 aa).

Residues Cys-78, His-81, and Cys-150 each contribute to the Zn(2+) site.

This sequence belongs to the GTP cyclohydrolase I family. Homomer.

The catalysed reaction is GTP + H2O = 7,8-dihydroneopterin 3'-triphosphate + formate + H(+). Its pathway is cofactor biosynthesis; 7,8-dihydroneopterin triphosphate biosynthesis; 7,8-dihydroneopterin triphosphate from GTP: step 1/1. The protein is GTP cyclohydrolase 1 of Listeria monocytogenes serotype 4b (strain CLIP80459).